The following is a 98-amino-acid chain: Cytochrome c2 (98 aa).

Position 1 is a pyrrolidone carboxylic acid (Gln-1). Residues Cys-10, Cys-13, His-14, and Met-76 each coordinate heme c.

It belongs to the cytochrome c family. Post-translationally, binds 1 heme c group covalently per subunit.

The protein localises to the periplasm. In terms of biological role, cytochrome c2 is found mainly in purple, non-sulfur, photosynthetic bacteria where it functions as the electron donor to the oxidized bacteriochlorophyll in the photophosphorylation pathway. However, it may also have a role in the respiratory chain and is found in some non-photosynthetic bacteria. The sequence is that of Cytochrome c2 from Rhodoplanes tepidamans (Rhodoplanes cryptolactis).